The following is a 164-amino-acid chain: Peptidyl-prolyl cis-trans isomerase B (164 aa).

The PPIase cyclophilin-type domain maps to 1–162 (MVTFHTNHGD…EDVIIESVTV (162 aa)).

Belongs to the cyclophilin-type PPIase family.

Its subcellular location is the cytoplasm. It carries out the reaction [protein]-peptidylproline (omega=180) = [protein]-peptidylproline (omega=0). With respect to regulation, inhibition by cyclosporin A with a Ki of 25 to 50 mu-mol, a concentration 1000-fold higher than that required for eukaryotic PPIases. PPIases accelerate the folding of proteins. It catalyzes the cis-trans isomerization of proline imidic peptide bonds in oligopeptides. The polypeptide is Peptidyl-prolyl cis-trans isomerase B (ppiB) (Escherichia coli (strain K12)).